The following is a 424-amino-acid chain: Protein-glutamate methylesterase/protein-glutamine glutaminase (424 aa).

Positions 6 to 123 (RVLVVDDSAF…SLDDFTRQLT (118 aa)) constitute a Response regulatory domain. Asp-57 bears the 4-aspartylphosphate mark. Residues 177–210 (SRLSPGRSPGGKEGVAGAVSAGSTRGEAIRPGKG) are disordered. The CheB-type methylesterase domain occupies 229 to 423 (RRPGIEVVAI…PAIVALVTGA (195 aa)). Active-site residues include Ser-241, His-268, and Asp-365.

The protein belongs to the CheB family. Phosphorylated by CheA. Phosphorylation of the N-terminal regulatory domain activates the methylesterase activity.

The protein resides in the cytoplasm. The catalysed reaction is [protein]-L-glutamate 5-O-methyl ester + H2O = L-glutamyl-[protein] + methanol + H(+). It carries out the reaction L-glutaminyl-[protein] + H2O = L-glutamyl-[protein] + NH4(+). Its function is as follows. Involved in chemotaxis. Part of a chemotaxis signal transduction system that modulates chemotaxis in response to various stimuli. Catalyzes the demethylation of specific methylglutamate residues introduced into the chemoreceptors (methyl-accepting chemotaxis proteins or MCP) by CheR. Also mediates the irreversible deamidation of specific glutamine residues to glutamic acid. This Moorella thermoacetica (strain ATCC 39073 / JCM 9320) protein is Protein-glutamate methylesterase/protein-glutamine glutaminase.